The chain runs to 118 residues: Cell division protein FtsB (118 aa).

Over 1-3 (MRL) the chain is Cytoplasmic. A helical membrane pass occupies residues 4–21 (LFLVLLVLLGLIQYPLWL). Over 22-118 (GKGGWFKVWD…PRPPATPPRR (97 aa)) the chain is Periplasmic. A coiled-coil region spans residues 28–62 (KVWDLQRQVAEQRETNDGLRARNTALEAEVRDLAT). Residues 88–118 (LPPGTPLPSDNSTPQASALSKPRPPATPPRR) form a disordered region. Residues 95 to 105 (PSDNSTPQASA) show a composition bias toward polar residues. Positions 109 to 118 (PRPPATPPRR) are enriched in pro residues.

The protein belongs to the FtsB family. As to quaternary structure, part of a complex composed of FtsB, FtsL and FtsQ.

Its subcellular location is the cell inner membrane. In terms of biological role, essential cell division protein. May link together the upstream cell division proteins, which are predominantly cytoplasmic, with the downstream cell division proteins, which are predominantly periplasmic. This chain is Cell division protein FtsB, found in Bordetella bronchiseptica (strain ATCC BAA-588 / NCTC 13252 / RB50) (Alcaligenes bronchisepticus).